The following is a 65-amino-acid chain: White colony protein WHS11 (65 aa).

Residues Met-1–Leu-17 are compositionally biased toward basic and acidic residues. Residues Met-1–Lys-32 form a disordered region. Residues Thr-18–Glu-27 show a composition bias toward polar residues.

It to yeast HSP12/GLP1 and S.pombe hsp9.

The chain is White colony protein WHS11 (WHS11) from Candida albicans (strain WO-1) (Yeast).